A 422-amino-acid chain; its full sequence is Serine hydroxymethyltransferase (422 aa).

(6S)-5,6,7,8-tetrahydrofolate is bound by residues Leu-118 and Gly-122–Leu-124. N6-(pyridoxal phosphate)lysine is present on Lys-227. Residues Glu-243 and Ser-351–Phe-353 contribute to the (6S)-5,6,7,8-tetrahydrofolate site.

This sequence belongs to the SHMT family. Homodimer. Requires pyridoxal 5'-phosphate as cofactor.

Its subcellular location is the cytoplasm. It catalyses the reaction (6R)-5,10-methylene-5,6,7,8-tetrahydrofolate + glycine + H2O = (6S)-5,6,7,8-tetrahydrofolate + L-serine. The protein operates within one-carbon metabolism; tetrahydrofolate interconversion. It participates in amino-acid biosynthesis; glycine biosynthesis; glycine from L-serine: step 1/1. In terms of biological role, catalyzes the reversible interconversion of serine and glycine with tetrahydrofolate (THF) serving as the one-carbon carrier. This reaction serves as the major source of one-carbon groups required for the biosynthesis of purines, thymidylate, methionine, and other important biomolecules. Also exhibits THF-independent aldolase activity toward beta-hydroxyamino acids, producing glycine and aldehydes, via a retro-aldol mechanism. This is Serine hydroxymethyltransferase from Kosmotoga olearia (strain ATCC BAA-1733 / DSM 21960 / TBF 19.5.1).